Consider the following 166-residue polypeptide: Large ribosomal subunit protein uL10 (166 aa).

This sequence belongs to the universal ribosomal protein uL10 family. As to quaternary structure, part of the ribosomal stalk of the 50S ribosomal subunit. The N-terminus interacts with L11 and the large rRNA to form the base of the stalk. The C-terminus forms an elongated spine to which L12 dimers bind in a sequential fashion forming a multimeric L10(L12)X complex.

Its function is as follows. Forms part of the ribosomal stalk, playing a central role in the interaction of the ribosome with GTP-bound translation factors. This chain is Large ribosomal subunit protein uL10, found in Bacillus pumilus (strain SAFR-032).